The chain runs to 505 residues: Apolipoprotein N-acyltransferase (505 aa).

6 helical membrane passes run 15–46, 55–75, 89–109, 129–149, 161–181, and 192–212; these read AAFV…LLLL, ALIA…WVHV, LFLM…FGWL, LWLI…WLWL, FAPI…AGSL, and MACI…MQWV. Positions 225–471 constitute a CN hydrolase domain; sequence IQGNIEQGLK…TGVLKATVTP (247 aa). Catalysis depends on glutamate 264, which acts as the Proton acceptor. Residue lysine 330 is part of the active site. Cysteine 382 (nucleophile) is an active-site residue. A helical membrane pass occupies residues 479–499; that stretch reads FLWGTTPLYLWVGLAAGFAFW.

The protein belongs to the CN hydrolase family. Apolipoprotein N-acyltransferase subfamily.

It localises to the cell inner membrane. The enzyme catalyses N-terminal S-1,2-diacyl-sn-glyceryl-L-cysteinyl-[lipoprotein] + a glycerophospholipid = N-acyl-S-1,2-diacyl-sn-glyceryl-L-cysteinyl-[lipoprotein] + a 2-acyl-sn-glycero-3-phospholipid + H(+). Its pathway is protein modification; lipoprotein biosynthesis (N-acyl transfer). Functionally, catalyzes the phospholipid dependent N-acylation of the N-terminal cysteine of apolipoprotein, the last step in lipoprotein maturation. The protein is Apolipoprotein N-acyltransferase of Vibrio cholerae serotype O1 (strain ATCC 39315 / El Tor Inaba N16961).